Here is a 141-residue protein sequence, read N- to C-terminus: NADPH-dependent 7-cyano-7-deazaguanine reductase (141 aa).

Cys-56 (thioimide intermediate) is an active-site residue. Asp-63 acts as the Proton donor in catalysis. Residues Val-78–Leu-80 and His-97–Glu-98 contribute to the substrate site.

It belongs to the GTP cyclohydrolase I family. QueF type 1 subfamily.

It is found in the cytoplasm. It carries out the reaction 7-aminomethyl-7-carbaguanine + 2 NADP(+) = 7-cyano-7-deazaguanine + 2 NADPH + 3 H(+). It functions in the pathway tRNA modification; tRNA-queuosine biosynthesis. In terms of biological role, catalyzes the NADPH-dependent reduction of 7-cyano-7-deazaguanine (preQ0) to 7-aminomethyl-7-deazaguanine (preQ1). This Trichodesmium erythraeum (strain IMS101) protein is NADPH-dependent 7-cyano-7-deazaguanine reductase.